Here is a 76-residue protein sequence, read N- to C-terminus: DNA-directed RNA polymerase subunit epsilon (76 aa).

Belongs to the RNA polymerase subunit epsilon family. RNAP is composed of a core of 2 alpha, a beta and a beta' subunit. The core is associated with a delta subunit, and at least one of epsilon or omega. When a sigma factor is associated with the core the holoenzyme is formed, which can initiate transcription.

The enzyme catalyses RNA(n) + a ribonucleoside 5'-triphosphate = RNA(n+1) + diphosphate. A non-essential component of RNA polymerase (RNAP). The polypeptide is DNA-directed RNA polymerase subunit epsilon (Streptococcus equi subsp. equi (strain 4047)).